The sequence spans 513 residues: Carboxyethyl-arginine beta-lactam-synthase (513 aa).

Mg(2+) contacts are provided by D253 and D351.

This sequence belongs to the asparagine synthetase family. As to quaternary structure, homodimer. Requires Mg(2+) as cofactor.

The catalysed reaction is N(2)-(2-carboxyethyl)-L-arginine + ATP = deoxyamidinoproclavaminate + AMP + diphosphate + H(+). The protein operates within antibiotic biosynthesis; clavulanate biosynthesis; clavulanate from D-glyceraldehyde 3-phosphate and L-arginine: step 2/8. In Streptomyces clavuligerus, this protein is Carboxyethyl-arginine beta-lactam-synthase (bls).